A 495-amino-acid chain; its full sequence is Probable staphylococcal-like nuclease CAN4 (495 aa).

Gly2 is lipidated: N-myristoyl glycine. Cys11 carries the S-palmitoyl cysteine lipid modification. Disordered regions lie at residues Asp45–Leu68 and Leu81–Pro101. The span at Leu50–Pro66 shows a compositional bias: pro residues. In terms of domain architecture, TNase-like spans Lys297 to Tyr470. Asp310 is a Ca(2+) binding site. The active site involves Arg377. Asp382 provides a ligand contact to Ca(2+). Residues Glu385 and Arg419 contribute to the active site.

It belongs to the thermonuclease family. Ca(2+) is required as a cofactor.

The protein resides in the cell membrane. Its function is as follows. Enzyme that catalyzes the hydrolysis of both DNA and RNA at the 5' position of the phosphodiester bond. This chain is Probable staphylococcal-like nuclease CAN4, found in Oryza sativa subsp. japonica (Rice).